The sequence spans 1643 residues: DNA-directed RNA polymerase subunit beta' (1643 aa).

4 residues coordinate Zn(2+): Cys64, Cys66, Cys79, and Cys82. 3 residues coordinate Mg(2+): Asp684, Asp686, and Asp688. Zn(2+)-binding residues include Cys1046, Cys1239, Cys1246, and Cys1249.

Belongs to the RNA polymerase beta' chain family. The RNAP catalytic core consists of 2 alpha, 1 beta, 1 beta' and 1 omega subunit. When a sigma factor is associated with the core the holoenzyme is formed, which can initiate transcription. It depends on Mg(2+) as a cofactor. Requires Zn(2+) as cofactor.

It catalyses the reaction RNA(n) + a ribonucleoside 5'-triphosphate = RNA(n+1) + diphosphate. Its function is as follows. DNA-dependent RNA polymerase catalyzes the transcription of DNA into RNA using the four ribonucleoside triphosphates as substrates. The polypeptide is DNA-directed RNA polymerase subunit beta' (Petrotoga mobilis (strain DSM 10674 / SJ95)).